The primary structure comprises 560 residues: Glucose-6-phosphate isomerase, cytosolic (560 aa).

A2 carries the post-translational modification N-acetylalanine. E361 (proton donor) is an active-site residue. Active-site residues include H392 and K517.

It belongs to the GPI family. As to quaternary structure, homodimer.

Its subcellular location is the cytoplasm. It carries out the reaction alpha-D-glucose 6-phosphate = beta-D-fructose 6-phosphate. Its pathway is carbohydrate degradation; glycolysis; D-glyceraldehyde 3-phosphate and glycerone phosphate from D-glucose: step 2/4. This Arabidopsis lyrata subsp. petraea (Northern rock-cress) protein is Glucose-6-phosphate isomerase, cytosolic (PGIC).